Here is a 140-residue protein sequence, read N- to C-terminus: Large ribosomal subunit protein uL16c (140 aa).

Belongs to the universal ribosomal protein uL16 family. As to quaternary structure, part of the 50S ribosomal subunit.

The protein localises to the plastid. The protein resides in the chloroplast. The protein is Large ribosomal subunit protein uL16c of Psilotum nudum (Whisk fern).